The sequence spans 89 residues: Protein YxiC (89 aa).

This is Protein YxiC (yxiC) from Bacillus subtilis (strain 168).